Consider the following 227-residue polypeptide: Urease accessory protein UreE (227 aa).

Residues 192–227 form a disordered region; it reads PHGSGLHVHAIHSHGHSHSHDHDHDHNHDHDHKHKQ. The segment covering 209–221 has biased composition (basic and acidic residues); that stretch reads HSHDHDHDHNHDH.

Belongs to the UreE family.

It localises to the cytoplasm. Its function is as follows. Involved in urease metallocenter assembly. Binds nickel. Probably functions as a nickel donor during metallocenter assembly. The chain is Urease accessory protein UreE from Yersinia bercovieri.